We begin with the raw amino-acid sequence, 345 residues long: Phosphoribosylformylglycinamidine cyclo-ligase (345 aa).

This sequence belongs to the AIR synthase family.

The protein resides in the cytoplasm. The enzyme catalyses 2-formamido-N(1)-(5-O-phospho-beta-D-ribosyl)acetamidine + ATP = 5-amino-1-(5-phospho-beta-D-ribosyl)imidazole + ADP + phosphate + H(+). Its pathway is purine metabolism; IMP biosynthesis via de novo pathway; 5-amino-1-(5-phospho-D-ribosyl)imidazole from N(2)-formyl-N(1)-(5-phospho-D-ribosyl)glycinamide: step 2/2. The protein is Phosphoribosylformylglycinamidine cyclo-ligase of Methylococcus capsulatus (strain ATCC 33009 / NCIMB 11132 / Bath).